The sequence spans 103 residues: Large ribosomal subunit protein bL21 (103 aa).

Belongs to the bacterial ribosomal protein bL21 family. In terms of assembly, part of the 50S ribosomal subunit. Contacts protein L20.

Its function is as follows. This protein binds to 23S rRNA in the presence of protein L20. The polypeptide is Large ribosomal subunit protein bL21 (Brevibacillus brevis (strain 47 / JCM 6285 / NBRC 100599)).